Here is a 212-residue protein sequence, read N- to C-terminus: Proteasome subunit beta 2 (212 aa).

The propeptide at 1–15 is removed in mature form; by autocatalysis; the sequence is MLHHPGTGQLRALKG. Thr-16 acts as the Nucleophile in catalysis.

It belongs to the peptidase T1B family. As to quaternary structure, the 20S proteasome core is composed of 14 alpha and 14 beta subunits that assemble into four stacked heptameric rings, resulting in a barrel-shaped structure. The two inner rings, each composed of seven catalytic beta subunits, are sandwiched by two outer rings, each composed of seven alpha subunits. The catalytic chamber with the active sites is on the inside of the barrel. Has a gated structure, the ends of the cylinder being occluded by the N-termini of the alpha-subunits. Is capped at one or both ends by the proteasome regulatory ATPase, PAN.

It localises to the cytoplasm. It carries out the reaction Cleavage of peptide bonds with very broad specificity.. With respect to regulation, the formation of the proteasomal ATPase PAN-20S proteasome complex, via the docking of the C-termini of PAN into the intersubunit pockets in the alpha-rings, triggers opening of the gate for substrate entry. Interconversion between the open-gate and close-gate conformations leads to a dynamic regulation of the 20S proteasome proteolysis activity. Component of the proteasome core, a large protease complex with broad specificity involved in protein degradation. The protein is Proteasome subunit beta 2 of Hyperthermus butylicus (strain DSM 5456 / JCM 9403 / PLM1-5).